The chain runs to 349 residues: Isopentenyl-diphosphate delta-isomerase (349 aa).

A substrate-binding site is contributed by 9–10 (RK). FMN is bound by residues 65–67 (AMT), serine 95, and asparagine 124. Residue 95-97 (STH) coordinates substrate. Glutamine 154 lines the substrate pocket. Glutamate 155 contributes to the Mg(2+) binding site. Residues lysine 186, serine 211, threonine 216, 262–264 (GLR), and 283–284 (SR) each bind FMN.

Belongs to the IPP isomerase type 2 family. Homooctamer. Dimer of tetramers. FMN serves as cofactor. It depends on NADPH as a cofactor. Requires Mg(2+) as cofactor.

Its subcellular location is the cytoplasm. It catalyses the reaction isopentenyl diphosphate = dimethylallyl diphosphate. Its function is as follows. Involved in the biosynthesis of isoprenoids. Catalyzes the 1,3-allylic rearrangement of the homoallylic substrate isopentenyl (IPP) to its allylic isomer, dimethylallyl diphosphate (DMAPP). The sequence is that of Isopentenyl-diphosphate delta-isomerase from Staphylococcus epidermidis (strain ATCC 35984 / DSM 28319 / BCRC 17069 / CCUG 31568 / BM 3577 / RP62A).